The primary structure comprises 630 residues: Pro-interleukin-16 (630 aa).

Disordered stretches follow at residues 30 to 268 (ENPG…FPLT) and 316 to 343 (PKEGASPTSSSNEDSAANGSAETSASDT). Residues 129-143 (IRASSSSSIKQRISS) show a composition bias toward low complexity. A Phosphoserine modification is found at Ser220. Residues 321-343 (SPTSSSNEDSAANGSAETSASDT) are compositionally biased toward polar residues. Positions 404 to 500 (KQLDSIHVTI…IVTRKLTAES (97 aa)) are interaction with PPP1R12A, PPP1R12B and PPP1R12C. 2 PDZ domains span residues 410–495 (HVTI…VTRK) and 532–617 (TVTL…IRRK).

In terms of assembly, homotetramer. Pro-interleukin-16 interacts (via PDZ 2 domain) with PPP1R12A, PPP1R12B and PPP1R12C. Pro-interleukin-16 interacts with GRIN2A. Pro-interleukin-16 interacts with GABPB1. Pro-interleukin-16 interacts (via PDZ 3 domain) with HDAC3.

It localises to the secreted. It is found in the cytoplasm. The protein localises to the nucleus. Interleukin-16 stimulates a migratory response in CD4+ lymphocytes, monocytes, and eosinophils. Primes CD4+ T-cells for IL-2 and IL-15 responsiveness. Also induces T-lymphocyte expression of interleukin 2 receptor. Ligand for CD4. Functionally, pro-interleukin-16 is involved in cell cycle progression in T-cells. Appears to be involved in transcriptional regulation of SKP2 and is probably part of a transcriptional repression complex on the core promoter of the SKP2 gene. May act as a scaffold for GABPB1 (the DNA-binding subunit the GABP transcription factor complex) and HDAC3 thus maintaining transcriptional repression and blocking cell cycle progression in resting T-cells. The chain is Pro-interleukin-16 (IL16) from Macaca fascicularis (Crab-eating macaque).